A 518-amino-acid chain; its full sequence is Receptor-interacting serine/threonine-protein kinase 3 (518 aa).

Serine 2 carries the post-translational modification Phosphoserine. One can recognise a Protein kinase domain in the interval 21 to 287 (LENQELVGKG…ECLPKTDEVF (267 aa)). 27-35 (VGKGGFGTV) is a binding site for ATP. Lysine 42 is covalently cross-linked (Glycyl lysine isopeptide (Lys-Gly) (interchain with G-Cter in ubiquitin)). ATP is bound at residue lysine 50. Aspartate 142 (proton acceptor) is an active-site residue. Serine 164 bears the Phosphoserine mark. Residue threonine 182 is modified to Phosphothreonine. Serine 199 and serine 227 each carry phosphoserine; by autocatalysis. A Phosphothreonine modification is found at threonine 252. A Phosphoserine modification is found at serine 299. Threonine 333 carries the post-translational modification Phosphothreonine. Glycyl lysine isopeptide (Lys-Gly) (interchain with G-Cter in ubiquitin) cross-links involve residues lysine 351 and lysine 363. The interval 355–443 (EEPPSSVPKK…WSCRTPEPNP (89 aa)) is disordered. The span at 384-408 (TAGTSSDSMAQPPQTPETSTFRNQM) shows a compositional bias: polar residues. A Phosphoserine modification is found at serine 389. Threonine 401 carries the post-translational modification Phosphothreonine. Residues 450 to 466 (VNIYNCSGVQVGDNNYL) carry the RIP homotypic interaction motif (RHIM) motif. The disordered stretch occupies residues 476–518 (TWGLAPSGKGRGLQHPPPVGSQEGPKDPEAWSRPQGWYNHSGK). Lysine 518 participates in a covalent cross-link: Glycyl lysine isopeptide (Lys-Gly) (interchain with G-Cter in ubiquitin).

This sequence belongs to the protein kinase superfamily. TKL Ser/Thr protein kinase family. In terms of assembly, interacts (via RIP homotypic interaction motif) with RIPK1 (via RIP homotypic interaction motif); this interaction induces RIPK1 phosphorylation and formation of a RIPK1-RIPK3 necrosis-inducing complex. Interacts with MLKL; the interaction is direct and triggers necroptosis. Interacts with ZBP1 (via RIP homotypic interaction motif); interaction with ZBP1 activates RIPK3, triggering necroptosis. Upon TNF-induced necrosis, the RIPK1-RIPK3 dimer further interacts with PGAM5 and MLKL; the formation of this complex leads to PGAM5 phosphorylation and increase in PGAM5 phosphatase activity. Binds TRAF2 and is recruited to the TNFR-1 signaling complex. Interacts with PYGL, GLUL and GLUD1; these interactions result in activation of these metabolic enzymes. Interacts with BIRC2/c-IAP1, BIRC3/c-IAP2 and XIAP/BIRC4. Interacts with ARHGEF2. Interacts with PELI1 (via atypical FHA domain); the phosphorylated form at Thr-182 binds preferentially to PELI1. Interacts with BUB1B, TRAF2 and STUB1. Interacts with CASP6. Component of the AIM2 PANoptosome complex, a multiprotein complex that drives inflammatory cell death (PANoptosis). (Microbial infection) Interacts (via RIP homotypic interaction motif/RHIM) with herpes simplex virus 1/HHV-1 protein RIR1/ICP6 (via RHIM); this interaction may induce heteromeric amyloid assemblies and prevent necroptosis activation. As to quaternary structure, (Microbial infection) Interacts (via RIP homotypic interaction motif/RHIM) with herpes simplex virus 2/HHV-2 protein RIR1/ICP10 (via RHIM); this interaction prevents necroptosis activation. In terms of processing, (Microbial infection) Proteolytically cleaved by S.flexneri OspD3 within the RIP homotypic interaction motif (RHIM), leading to its degradation and inhibition of necroptosis. Post-translationally, RIPK1 and RIPK3 undergo reciprocal auto- and trans-phosphorylation. Autophosphorylated following interaction with ZBP1. Phosphorylation of Ser-199 plays a role in the necroptotic function of RIPK3. Autophosphorylates at Ser-227 following activation by ZBP1: phosphorylation at these sites is a hallmark of necroptosis and is required for binding MLKL. Phosphorylation at Thr-182 is important for its kinase activity, interaction with PELI1 and PELI1-mediated 'Lys-48'-linked polyubiquitination and for its ability to mediate TNF-induced necroptosis. Polyubiquitinated with 'Lys-48' and 'Lys-63'-linked chains by BIRC2/c-IAP1 and BIRC3/c-IAP2, leading to activation of NF-kappa-B. Polyubiquitinated with 'Lys-48'-linked chains by PELI1 leading to its subsequent proteasome-dependent degradation. Ubiquitinated by STUB1 leading to its subsequent proteasome-dependent degradation. Deubiquitinated by USP22. In terms of tissue distribution, highly expressed in the pancreas. Detected at lower levels in heart, placenta, lung and kidney. Expression is significantly increased in colon and lung cancers.

Its subcellular location is the cytoplasm. It is found in the cytosol. The protein localises to the nucleus. It catalyses the reaction L-seryl-[protein] + ATP = O-phospho-L-seryl-[protein] + ADP + H(+). The catalysed reaction is L-threonyl-[protein] + ATP = O-phospho-L-threonyl-[protein] + ADP + H(+). With respect to regulation, activity is stimulated by ZBP1, which senses double-stranded Z-RNA structures. RIPK3-dependent necroptosis is inhibited by RIPK1: RIPK1 prevents the ZBP1-induced activation of RIPK3 via FADD-mediated recruitment of CASP8, which cleaves RIPK1 and limits TNF-induced necroptosis. Serine/threonine-protein kinase that activates necroptosis and apoptosis, two parallel forms of cell death. Necroptosis, a programmed cell death process in response to death-inducing TNF-alpha family members, is triggered by RIPK3 following activation by ZBP1. Activated RIPK3 forms a necrosis-inducing complex and mediates phosphorylation of MLKL, promoting MLKL localization to the plasma membrane and execution of programmed necrosis characterized by calcium influx and plasma membrane damage. In addition to TNF-induced necroptosis, necroptosis can also take place in the nucleus in response to orthomyxoviruses infection: following ZBP1 activation, which senses double-stranded Z-RNA structures, nuclear RIPK3 catalyzes phosphorylation and activation of MLKL, promoting disruption of the nuclear envelope and leakage of cellular DNA into the cytosol. Also regulates apoptosis: apoptosis depends on RIPK1, FADD and CASP8, and is independent of MLKL and RIPK3 kinase activity. Phosphorylates RIPK1: RIPK1 and RIPK3 undergo reciprocal auto- and trans-phosphorylation. In some cell types, also able to restrict viral replication by promoting cell death-independent responses. In response to Zika virus infection in neurons, promotes a cell death-independent pathway that restricts viral replication: together with ZBP1, promotes a death-independent transcriptional program that modifies the cellular metabolism via up-regulation expression of the enzyme ACOD1/IRG1 and production of the metabolite itaconate. Itaconate inhibits the activity of succinate dehydrogenase, generating a metabolic state in neurons that suppresses replication of viral genomes. RIPK3 binds to and enhances the activity of three metabolic enzymes: GLUL, GLUD1, and PYGL. These metabolic enzymes may eventually stimulate the tricarboxylic acid cycle and oxidative phosphorylation, which could result in enhanced ROS production. In terms of biological role, (Microbial infection) In case of herpes simplex virus 1/HHV-1 infection, forms heteromeric amyloid structures with HHV-1 protein RIR1/ICP6 which may inhibit RIPK3-mediated necroptosis, thereby preventing host cell death pathway and allowing viral evasion. This Homo sapiens (Human) protein is Receptor-interacting serine/threonine-protein kinase 3.